Reading from the N-terminus, the 164-residue chain is Protein SprT (164 aa).

Positions 14-156 (QLAESFFKRP…LCRRCRQTLV (143 aa)) constitute a SprT-like domain. Position 69 (His69) interacts with Zn(2+). The active site involves Glu70. Residue His73 coordinates Zn(2+).

The protein belongs to the SprT family. Zn(2+) serves as cofactor.

The protein localises to the cytoplasm. This is Protein SprT from Pseudomonas fluorescens (strain ATCC BAA-477 / NRRL B-23932 / Pf-5).